A 126-amino-acid chain; its full sequence is Small ribosomal subunit protein uS13c (126 aa).

A disordered region spans residues 95-126; the sequence is GLPLRGQNTRTNARTKRGIKKTMAGKKKAPRK. Basic residues predominate over residues 107–126; it reads ARTKRGIKKTMAGKKKAPRK.

Belongs to the universal ribosomal protein uS13 family. In terms of assembly, part of the 30S ribosomal subunit.

It localises to the plastid. It is found in the chloroplast. Its function is as follows. Located at the top of the head of the 30S subunit, it contacts several helices of the 16S rRNA. This chain is Small ribosomal subunit protein uS13c, found in Gracilaria tenuistipitata var. liui (Red alga).